Here is a 263-residue protein sequence, read N- to C-terminus: Small ribosomal subunit protein eS4, Y isoform 1 (263 aa).

The S4 RNA-binding domain occupies 42–104; sequence LPLIIFLRNR…TGEHFRLVYD (63 aa).

It belongs to the eukaryotic ribosomal protein eS4 family.

The protein is Small ribosomal subunit protein eS4, Y isoform 1 (RPS4Y1) of Macaca fuscata fuscata (Japanese macaque).